Reading from the N-terminus, the 413-residue chain is 3-isopropylmalate dehydratase large subunit (413 aa).

Cys295, Cys353, and Cys356 together coordinate [4Fe-4S] cluster.

Belongs to the aconitase/IPM isomerase family. LeuC type 2 subfamily. As to quaternary structure, heterodimer of LeuC and LeuD. [4Fe-4S] cluster serves as cofactor.

The enzyme catalyses (2R,3S)-3-isopropylmalate = (2S)-2-isopropylmalate. It participates in amino-acid biosynthesis; L-leucine biosynthesis; L-leucine from 3-methyl-2-oxobutanoate: step 2/4. Its function is as follows. Catalyzes the isomerization between 2-isopropylmalate and 3-isopropylmalate, via the formation of 2-isopropylmaleate. The protein is 3-isopropylmalate dehydratase large subunit of Pyrobaculum calidifontis (strain DSM 21063 / JCM 11548 / VA1).